The primary structure comprises 124 residues: Ribonuclease P protein subunit p14 (124 aa).

It belongs to the eukaryotic/archaeal RNase P protein component 2 family. RNase P consists of a catalytic RNA moiety and about 10 protein subunits; POP1, POP4, POP5, POP7, RPP14, RPP21, RPP25, RPP30, RPP38 and RPP40. Within the RNase P complex, POP1, POP7 and RPP25 form the 'finger' subcomplex, POP5, RPP14, RPP40 and homodimeric RPP30 form the 'palm' subcomplex, and RPP21, POP4 and RPP38 form the 'wrist' subcomplex. All subunits of the RNase P complex interact with the catalytic RNA.

The protein resides in the nucleus. The protein localises to the nucleolus. In terms of biological role, component of ribonuclease P, a ribonucleoprotein complex that generates mature tRNA molecules by cleaving their 5'-ends. The chain is Ribonuclease P protein subunit p14 (RPP14) from Homo sapiens (Human).